The chain runs to 659 residues: Cysteine-rich receptor-like protein kinase 5 (659 aa).

Residues 1-24 (MSAYTSLNFLFLLTFFIGSLRVSA) form the signal peptide. Over 25–279 (QLQDPTYVGH…FPPGKGKNST (255 aa)) the chain is Extracellular. Gnk2-homologous domains follow at residues 28-132 (DPTY…DRNI) and 138-243 (TTTT…VYPF). 2 N-linked (GlcNAc...) asparagine glycosylation sites follow: Asn175 and Asn277. A helical membrane pass occupies residues 280-300 (VIIIAIVVPVAISVLICVAVF). Residues 301–659 (SFHASKRAKK…AASITILAPR (359 aa)) lie on the Cytoplasmic side of the membrane. The 280-residue stretch at 340-619 (FSMCNKLGQG…QMLTTSSIAL (280 aa)) folds into the Protein kinase domain. ATP is bound by residues 346–354 (LGQGGFGQV) and Lys368. Position 413 is a phosphotyrosine (Tyr413). Asp465 serves as the catalytic Proton acceptor. At Thr505 the chain carries Phosphothreonine. Tyr513 is subject to Phosphotyrosine.

It belongs to the protein kinase superfamily. Ser/Thr protein kinase family. CRK subfamily. Interacts with CRKIP1 (KAPP), CRKIP2 and CRKIP3, three kinase-associated type 2C proteins.

The protein localises to the membrane. It carries out the reaction L-seryl-[protein] + ATP = O-phospho-L-seryl-[protein] + ADP + H(+). The catalysed reaction is L-threonyl-[protein] + ATP = O-phospho-L-threonyl-[protein] + ADP + H(+). In terms of biological role, involved in multiple distinct defense responses. May function as a disease resistance (R) protein. The protein is Cysteine-rich receptor-like protein kinase 5 (CRK5) of Arabidopsis thaliana (Mouse-ear cress).